Consider the following 475-residue polypeptide: Bifunctional protein HldE (475 aa).

The interval 1 to 318 is ribokinase; the sequence is MKITLPEFEK…ANALYTEQET (318 aa). Residue 195-198 participates in ATP binding; sequence NMSE. Asp264 is a catalytic residue. The interval 344 to 475 is cytidylyltransferase; the sequence is MTNGCFDILH…DIIKTIRERG (132 aa).

In the N-terminal section; belongs to the carbohydrate kinase PfkB family. It in the C-terminal section; belongs to the cytidylyltransferase family. As to quaternary structure, homodimer.

It catalyses the reaction D-glycero-beta-D-manno-heptose 7-phosphate + ATP = D-glycero-beta-D-manno-heptose 1,7-bisphosphate + ADP + H(+). The catalysed reaction is D-glycero-beta-D-manno-heptose 1-phosphate + ATP + H(+) = ADP-D-glycero-beta-D-manno-heptose + diphosphate. It participates in nucleotide-sugar biosynthesis; ADP-L-glycero-beta-D-manno-heptose biosynthesis; ADP-L-glycero-beta-D-manno-heptose from D-glycero-beta-D-manno-heptose 7-phosphate: step 1/4. It functions in the pathway nucleotide-sugar biosynthesis; ADP-L-glycero-beta-D-manno-heptose biosynthesis; ADP-L-glycero-beta-D-manno-heptose from D-glycero-beta-D-manno-heptose 7-phosphate: step 3/4. Catalyzes the phosphorylation of D-glycero-D-manno-heptose 7-phosphate at the C-1 position to selectively form D-glycero-beta-D-manno-heptose-1,7-bisphosphate. Functionally, catalyzes the ADP transfer from ATP to D-glycero-beta-D-manno-heptose 1-phosphate, yielding ADP-D-glycero-beta-D-manno-heptose. This chain is Bifunctional protein HldE, found in Aeromonas hydrophila subsp. hydrophila (strain ATCC 7966 / DSM 30187 / BCRC 13018 / CCUG 14551 / JCM 1027 / KCTC 2358 / NCIMB 9240 / NCTC 8049).